Reading from the N-terminus, the 358-residue chain is Peptide chain release factor 1 (358 aa).

At Gln235 the chain carries N5-methylglutamine.

This sequence belongs to the prokaryotic/mitochondrial release factor family. Methylated by PrmC. Methylation increases the termination efficiency of RF1.

The protein resides in the cytoplasm. Functionally, peptide chain release factor 1 directs the termination of translation in response to the peptide chain termination codons UAG and UAA. The chain is Peptide chain release factor 1 from Neisseria meningitidis serogroup C (strain 053442).